The chain runs to 376 residues: N-acetyldiaminopimelate deacetylase (376 aa).

D69 is a catalytic residue. Residue E127 is the Proton acceptor of the active site.

It belongs to the peptidase M20A family. N-acetyldiaminopimelate deacetylase subfamily.

It catalyses the reaction N-acetyl-(2S,6S)-2,6-diaminopimelate + H2O = (2S,6S)-2,6-diaminopimelate + acetate. It functions in the pathway amino-acid biosynthesis; L-lysine biosynthesis via DAP pathway; LL-2,6-diaminopimelate from (S)-tetrahydrodipicolinate (acetylase route): step 3/3. Its function is as follows. Catalyzes the conversion of N-acetyl-diaminopimelate to diaminopimelate and acetate. This chain is N-acetyldiaminopimelate deacetylase, found in Lactococcus lactis subsp. cremoris (strain SK11).